A 142-amino-acid chain; its full sequence is Large ribosomal subunit protein bL19 (142 aa).

The protein belongs to the bacterial ribosomal protein bL19 family.

This protein is located at the 30S-50S ribosomal subunit interface and may play a role in the structure and function of the aminoacyl-tRNA binding site. This chain is Large ribosomal subunit protein bL19, found in Psychrobacter cryohalolentis (strain ATCC BAA-1226 / DSM 17306 / VKM B-2378 / K5).